The primary structure comprises 427 residues: 3-phosphoshikimate 1-carboxyvinyltransferase (427 aa).

Residues Lys-22, Ser-23, and Arg-27 each contribute to the 3-phosphoshikimate site. Phosphoenolpyruvate is bound at residue Lys-22. The phosphoenolpyruvate site is built by Gly-96 and Arg-124. Ser-169, Ser-170, Gln-171, Ser-197, Asp-313, Asn-336, and Lys-340 together coordinate 3-phosphoshikimate. A phosphoenolpyruvate-binding site is contributed by Gln-171. The active-site Proton acceptor is the Asp-313. Phosphoenolpyruvate-binding residues include Arg-344, Arg-386, and Lys-411.

The protein belongs to the EPSP synthase family. Monomer.

The protein localises to the cytoplasm. The enzyme catalyses 3-phosphoshikimate + phosphoenolpyruvate = 5-O-(1-carboxyvinyl)-3-phosphoshikimate + phosphate. Its pathway is metabolic intermediate biosynthesis; chorismate biosynthesis; chorismate from D-erythrose 4-phosphate and phosphoenolpyruvate: step 6/7. Functionally, catalyzes the transfer of the enolpyruvyl moiety of phosphoenolpyruvate (PEP) to the 5-hydroxyl of shikimate-3-phosphate (S3P) to produce enolpyruvyl shikimate-3-phosphate and inorganic phosphate. The chain is 3-phosphoshikimate 1-carboxyvinyltransferase from Escherichia coli O17:K52:H18 (strain UMN026 / ExPEC).